The following is an 808-amino-acid chain: Phospholipase D alpha 1 (808 aa).

The 125-residue stretch at 1 to 125 (MSKVLLHGTL…LDGDEVDKWI (125 aa)) folds into the C2 domain. Residue Asp-186 participates in Ca(2+) binding. The region spanning 326–364 (TMFTHHQKIVVVDHELPRGGSQKRRVMSFVGGIDLCDGR) is the PLD phosphodiesterase 1 domain. Catalysis depends on residues His-331, Lys-333, and Asp-338. His-331 provides a ligand contact to a 1,2-diacyl-sn-glycero-3-phosphate. 2 residues coordinate Ca(2+): His-370 and His-404. The a 1,2-diacyl-sn-glycero-3-phosphate site is built by Gln-520 and His-659. A PLD phosphodiesterase 2 domain is found at 654-681 (FMIYVHSKMMIVDDEYIIVGSANINQRS). Active-site residues include His-659, Lys-661, and Asp-666. Glu-720 lines the Ca(2+) pocket.

It belongs to the phospholipase D family. C2-PLD subfamily. As to quaternary structure, interacts (via C2 domain) with CARDA (via RGD or KGE motifs). The cofactor is Ca(2+).

It carries out the reaction a 1,2-diacyl-sn-glycero-3-phosphocholine + H2O = a 1,2-diacyl-sn-glycero-3-phosphate + choline + H(+). Hydrolyzes glycerol-phospholipids at the terminal phosphodiesteric bond. Plays an important role in various cellular processes. This Cynara cardunculus (Cardoon) protein is Phospholipase D alpha 1.